The primary structure comprises 131 residues: Profilin-2 (131 aa).

Belongs to the profilin family. In terms of assembly, occurs in many kinds of cells as a complex with monomeric actin in a 1:1 ratio.

Its subcellular location is the cytoplasm. It is found in the cytoskeleton. Its function is as follows. Binds to actin and affects the structure of the cytoskeleton. At high concentrations, profilin prevents the polymerization of actin, whereas it enhances it at low concentrations. By binding to PIP2, it inhibits the formation of IP3 and DG. In Solanum lycopersicum (Tomato), this protein is Profilin-2.